The following is a 209-amino-acid chain: CASP-like protein 1A1 (209 aa).

Residues 1–26 form a disordered region; it reads MEEAKHNEAEEAQGIEAREAKQIEAG. At 1–49 the chain is on the cytoplasmic side; it reads MEEAKHNEAEEAQGIEAREAKQIEAGETSRSSRKLITFEPKLVINKGIS. Residues 50 to 70 form a helical membrane-spanning segment; the sequence is VLGFVLRLFAVFGTIGSALAM. Residues 71–95 are Extracellular-facing; it reads GTTHESVVSLSQLVLLKVKYSDLPT. A helical transmembrane segment spans residues 96-116; sequence LMFFVVANAISGGYLVLSLPV. Topologically, residues 117-130 are cytoplasmic; sequence SIFHIFSTQAKTSR. Residues 131 to 151 traverse the membrane as a helical segment; it reads IILLVVDTVMLALVSSGASAA. The Extracellular segment spans residues 152 to 183; it reads TATVYLAHEGNTTANWPPICQQFDGFCERISG. N-linked (GlcNAc...) asparagine glycosylation is present at Asn-162. A helical transmembrane segment spans residues 184 to 204; sequence SLIGSFCAVILLMLIVINSAI. Over 205-209 the chain is Cytoplasmic; that stretch reads SLSRH.

Belongs to the Casparian strip membrane proteins (CASP) family. As to quaternary structure, homodimer and heterodimers. As to expression, expressed in the root endodermis.

The protein localises to the cell membrane. The chain is CASP-like protein 1A1 from Arabidopsis thaliana (Mouse-ear cress).